Reading from the N-terminus, the 729-residue chain is DNA topoisomerase 3 (729 aa).

One can recognise a Toprim domain in the interval lysine 3 to threonine 136. Glutamate 9 and aspartate 105 together coordinate Mg(2+). The Topo IA-type catalytic domain maps to tyrosine 153–valine 594. The interaction with DNA stretch occupies residues asparagine 187–glutamine 192. The active-site O-(5'-phospho-DNA)-tyrosine intermediate is the tyrosine 310. Basic and acidic residues predominate over residues glutamate 686–glutamate 713. The segment at glutamate 686 to proline 718 is disordered.

It belongs to the type IA topoisomerase family. Mg(2+) is required as a cofactor.

The catalysed reaction is ATP-independent breakage of single-stranded DNA, followed by passage and rejoining.. Functionally, releases the supercoiling and torsional tension of DNA, which is introduced during the DNA replication and transcription, by transiently cleaving and rejoining one strand of the DNA duplex. Introduces a single-strand break via transesterification at a target site in duplex DNA. The scissile phosphodiester is attacked by the catalytic tyrosine of the enzyme, resulting in the formation of a DNA-(5'-phosphotyrosyl)-enzyme intermediate and the expulsion of a 3'-OH DNA strand. The free DNA strand then undergoes passage around the unbroken strand, thus removing DNA supercoils. Finally, in the religation step, the DNA 3'-OH attacks the covalent intermediate to expel the active-site tyrosine and restore the DNA phosphodiester backbone. The chain is DNA topoisomerase 3 from Bacillus cereus (strain ATCC 10987 / NRS 248).